Here is a 167-residue protein sequence, read N- to C-terminus: S-ribosylhomocysteine lyase (167 aa).

The Fe cation site is built by H54, H58, and C128.

It belongs to the LuxS family. In terms of assembly, homodimer. Requires Fe cation as cofactor.

It carries out the reaction S-(5-deoxy-D-ribos-5-yl)-L-homocysteine = (S)-4,5-dihydroxypentane-2,3-dione + L-homocysteine. Involved in the synthesis of autoinducer 2 (AI-2) which is secreted by bacteria and is used to communicate both the cell density and the metabolic potential of the environment. The regulation of gene expression in response to changes in cell density is called quorum sensing. Catalyzes the transformation of S-ribosylhomocysteine (RHC) to homocysteine (HC) and 4,5-dihydroxy-2,3-pentadione (DPD). The chain is S-ribosylhomocysteine lyase from Haemophilus influenzae (strain PittGG).